We begin with the raw amino-acid sequence, 154 residues long: Protein X (154 aa).

The interval 68–117 (PCALRFTSARRMETTVNAHQVLPKVLHKRTLGLSAMSTTDLEAYFKDCLF) is mitochondrial targeting sequence.

It belongs to the orthohepadnavirus protein X family. May form homodimer. May interact with host CEBPA, CFLAR, CREB1, DDB1, E4F1, HBXIP, HSPD1/HSP60, NFKBIA, POLR2E and SMAD4. Interacts with host SMC5-SMC6 complex and induces its degradation. Interacts with host TRPC4AP; leading to prevent ubiquitination of TRPC4AP. Interacts with host PLSCR1; this interaction promotes ubiquitination and degradation of HBx and impairs HBx-mediated cell proliferation. A fraction may be phosphorylated in insect cells and HepG2 cells, a human hepatoblastoma cell line. Phosphorylated in vitro by host protein kinase C or mitogen-activated protein kinase. N-acetylated in insect cells.

It is found in the host cytoplasm. The protein localises to the host nucleus. The protein resides in the host mitochondrion. Its function is as follows. Multifunctional protein that plays a role in silencing host antiviral defenses and promoting viral transcription. Does not seem to be essential for HBV infection. May be directly involved in development of cirrhosis and liver cancer (hepatocellular carcinoma). Most of cytosolic activities involve modulation of cytosolic calcium. The effect on apoptosis is controversial depending on the cell types in which the studies have been conducted. May induce apoptosis by localizing in mitochondria and causing loss of mitochondrial membrane potential. May also modulate apoptosis by binding host CFLAR, a key regulator of the death-inducing signaling complex (DISC). Promotes viral transcription by using the host E3 ubiquitin ligase DDB1 to target the SMC5-SMC6 complex to proteasomal degradation. This host complex would otherwise bind to viral episomal DNA, and prevents its transcription. Moderately stimulates transcription of many different viral and cellular transcription elements. Promoters and enhancers stimulated by HBx contain DNA binding sites for NF-kappa-B, AP-1, AP-2, c-EBP, ATF/CREB, or the calcium-activated factor NF-AT. This is Protein X from Hepatitis B virus genotype C subtype adr (isolate Japan/Nishioka/1983) (HBV-C).